The primary structure comprises 312 residues: Acetyl-coenzyme A carboxylase carboxyl transferase subunit alpha (312 aa).

A CoA carboxyltransferase C-terminal domain is found at 36–286; sequence RLEKEVKSIY…KEYFLDALRT (251 aa).

It belongs to the AccA family. In terms of assembly, acetyl-CoA carboxylase is a heterohexamer composed of biotin carboxyl carrier protein (AccB), biotin carboxylase (AccC) and two subunits each of ACCase subunit alpha (AccA) and ACCase subunit beta (AccD).

It is found in the cytoplasm. It catalyses the reaction N(6)-carboxybiotinyl-L-lysyl-[protein] + acetyl-CoA = N(6)-biotinyl-L-lysyl-[protein] + malonyl-CoA. The protein operates within lipid metabolism; malonyl-CoA biosynthesis; malonyl-CoA from acetyl-CoA: step 1/1. In terms of biological role, component of the acetyl coenzyme A carboxylase (ACC) complex. First, biotin carboxylase catalyzes the carboxylation of biotin on its carrier protein (BCCP) and then the CO(2) group is transferred by the carboxyltransferase to acetyl-CoA to form malonyl-CoA. This chain is Acetyl-coenzyme A carboxylase carboxyl transferase subunit alpha, found in Helicobacter pylori (strain P12).